We begin with the raw amino-acid sequence, 132 residues long: Small ribosomal subunit protein uS8c (132 aa).

This sequence belongs to the universal ribosomal protein uS8 family. As to quaternary structure, part of the 30S ribosomal subunit.

The protein localises to the plastid. Its subcellular location is the chloroplast. In terms of biological role, one of the primary rRNA binding proteins, it binds directly to 16S rRNA central domain where it helps coordinate assembly of the platform of the 30S subunit. The protein is Small ribosomal subunit protein uS8c (rps8) of Rhodomonas salina (Cryptomonas salina).